The chain runs to 378 residues: Cyclic di-GMP phosphodiesterase response regulator RpfG (378 aa).

Residues 29-147 (NIVIVDDQMS…ELRARCSNLL (119 aa)) form the Response regulatory domain. At Asp80 the chain carries 4-aspartylphosphate. One can recognise an HD-GYP domain in the interval 174–371 (VEERERETLS…LEQICGQFST (198 aa)).

In terms of assembly, interacts with a subset of GGDEF domain-containing proteins. Post-translationally, phosphorylated and activated by RpfC.

It localises to the cytoplasm. It catalyses the reaction 3',3'-c-di-GMP + 2 H2O = 2 GMP + 2 H(+). Functionally, member of the two-component regulatory system RpfG/RpfC, which is involved in the perception and response to the diffusible signaling factor (DSF), which is essential for cell-cell signaling. Detection of DSF leads to the positive regulation of biofilm dispersal and the production of virulence factors. Activated RpfG degrades cyclic di-GMP to GMP, leading to the activation of Clp, a global transcriptional regulator that regulates a large set of genes in DSF pathway. May also directly control genes involved in biofilm dispersal. The chain is Cyclic di-GMP phosphodiesterase response regulator RpfG (rpfG) from Xanthomonas campestris pv. campestris (strain 8004).